The following is a 433-amino-acid chain: Tol-Pal system protein TolB (433 aa).

An N-terminal signal peptide occupies residues 1–21; the sequence is MRNLLRGMLVVICCMAGIVMA.

It belongs to the TolB family. In terms of assembly, the Tol-Pal system is composed of five core proteins: the inner membrane proteins TolA, TolQ and TolR, the periplasmic protein TolB and the outer membrane protein Pal. They form a network linking the inner and outer membranes and the peptidoglycan layer.

The protein resides in the periplasm. Functionally, part of the Tol-Pal system, which plays a role in outer membrane invagination during cell division and is important for maintaining outer membrane integrity. This chain is Tol-Pal system protein TolB, found in Pseudomonas fluorescens (strain Pf0-1).